Consider the following 207-residue polypeptide: Vexin (207 aa).

Positions 55-102 (LELLPHRGDRRDPGDGRRFGRLQTARPPTAHPAKASARPVGISEPKTS) are disordered. A compositionally biased stretch (basic and acidic residues) spans 58-72 (LPHRGDRRDPGDGRR).

The protein belongs to the vexin family.

It is found in the cell membrane. Its subcellular location is the nucleus. Required for neurogenesis in the neural plate and retina. Strongly cooperates with neural bHLH factors to promote neurogenesis. This Pongo abelii (Sumatran orangutan) protein is Vexin.